Here is a 235-residue protein sequence, read N- to C-terminus: Mediator of RNA polymerase II transcription subunit 29 (235 aa).

The segment covering 1-14 (MMNQMGMMMQQQGV) has biased composition (low complexity). A disordered region spans residues 1-54 (MMNQMGMMMQQQGVGVPGGPGGVGGVGMPGPGGVGVAPGMMQSPQMQQAQQQQV). Positions 15-36 (GVPGGPGGVGGVGMPGPGGVGV) are enriched in gly residues. Residues 37–54 (APGMMQSPQMQQAQQQQV) are compositionally biased toward low complexity.

This sequence belongs to the Mediator complex subunit 29 family. As to quaternary structure, component of the Mediator complex.

It is found in the nucleus. In terms of biological role, component of the Mediator complex, a coactivator involved in the regulated transcription of nearly all RNA polymerase II-dependent genes. Mediator functions as a bridge to convey information from gene-specific regulatory proteins to the basal RNA polymerase II transcription machinery. Mediator is recruited to promoters by direct interactions with regulatory proteins and serves as a scaffold for the assembly of a functional preinitiation complex with RNA polymerase II and the general transcription factors. The sequence is that of Mediator of RNA polymerase II transcription subunit 29 (ix) from Anopheles gambiae (African malaria mosquito).